Here is a 309-residue protein sequence, read N- to C-terminus: MILLTFHTRRLVSHAYCGLKPASQKKSIALEMTRPSSNLADFREAFAKAKHIAVITGAGVSAESGVPTFRGAGGYWRKWQAQHLATPEAFARNPSRVWEFYHYRREVMLTKNPNPAHLAIAECETRLRKQGRKLVVITQNIDELHRKAGSRNLFDIHGSLFKTRCTSCGRVKENYKSPICPALDGKGAPESDVQDAKIPVEQLPRCEENGCSGLLRPNVVWFGETLDSNLLGEVEKELETCDLCVVVGTSSVVYPAAMFAPQVAARGVPVAEFNMENTPATTSFTFHFHGPCGTTLPPALARHETELIS.

Residues 1–35 (MILLTFHTRRLVSHAYCGLKPASQKKSIALEMTRP) constitute a mitochondrion transit peptide. The region spanning 36–306 (SSNLADFREA…PPALARHETE (271 aa)) is the Deacetylase sirtuin-type domain. 57–76 (GAGVSAESGVPTFRGAGGYW) contributes to the NAD(+) binding site. Residues Tyr-101 and Arg-104 each coordinate substrate. 139–142 (QNID) contributes to the NAD(+) binding site. His-157 (proton acceptor) is an active-site residue. The Zn(2+) site is built by Cys-165, Cys-168, Cys-206, and Cys-211. NAD(+)-binding positions include 248-250 (GTS), 274-276 (NME), and Cys-292.

The protein belongs to the sirtuin family. Class III subfamily. It depends on Zn(2+) as a cofactor.

It is found in the mitochondrion. The protein localises to the cytoplasm. Its subcellular location is the cytosol. The protein resides in the nucleus. The enzyme catalyses N(6)-malonyl-L-lysyl-[protein] + NAD(+) + H2O = 2''-O-malonyl-ADP-D-ribose + nicotinamide + L-lysyl-[protein]. It catalyses the reaction N(6)-succinyl-L-lysyl-[protein] + NAD(+) + H2O = 2''-O-succinyl-ADP-D-ribose + nicotinamide + L-lysyl-[protein]. The catalysed reaction is N(6)-glutaryl-L-lysyl-[protein] + NAD(+) + H2O = 2''-O-glutaryl-ADP-D-ribose + nicotinamide + L-lysyl-[protein]. Functionally, NAD-dependent lysine demalonylase, desuccinylase and deglutarylase that specifically removes malonyl, succinyl and glutaryl groups on target proteins. Has weak NAD-dependent protein deacetylase activity; however this activity may not be physiologically relevant in vivo. This is NAD-dependent protein deacylase sirtuin-5A, mitochondrial (sirt5-a) from Xenopus laevis (African clawed frog).